We begin with the raw amino-acid sequence, 138 residues long: Acidic phospholipase A2 homolog sistruxin A (138 aa).

A signal peptide spans 1 to 37 (MRALWIVAVLLLGVEGSLVEFETLIMKIAGRSGVWYY). 7 disulfide bridges follow: Cys42–Cys131, Cys44–Cys60, Cys59–Cys111, Cys65–Cys138, Cys66–Cys104, Cys73–Cys97, and Cys91–Cys102. Positions 78 to 83 (DVYTYR) are excised as a propeptide. Gln84 carries the pyrrolidone carboxylic acid modification. The propeptide occupies 119–124 (YNHKYW).

Belongs to the phospholipase A2 family. Group II subfamily. D49 sub-subfamily. As to quaternary structure, heterodimer of an acidic subunit and a basic chain. The acidic subunit is non-toxic, without enzymatic activity and comprises 3 peptides that are cross-linked by 7 disulfide bridges. The basic subunit is toxic, has phospholipase A2 activity and is composed of a single chain. As to expression, expressed by the venom gland.

It localises to the secreted. In terms of biological role, snake venom phospholipase A2 (PLA2) that inhibits neuromuscular transmission by blocking acetylcholine release from the nerve termini. The chain is Acidic phospholipase A2 homolog sistruxin A from Sistrurus tergeminus (Western massasauga).